Consider the following 1409-residue polypeptide: MDKAKRNIKPFDGEKYAIWKFRIRALLAEQDVLKVVDGLMPNEVDDSWKKAERCAKSTIIEYLSDSFLNFATSDITARQILENLDAVYERKSLASQLALRKRLLSLKLSSEMSLLSHFHIFDELISELLAAGAKIEEMDKISHLLITLPSCYDGIITAIETLSEENLTLAFVKNRLLDQEIKIKNDHNDTSKKVMNAIVHNNNNTYKNNLFKNRVTKPKKIFKGNSKYKVKCHHCGREGHIKKDCFHYKRILNNKNKENEKQVQTATSHGIAFMVKEVNNTSVMDNCGFVLDSGASDHLINDESLYTDSVEVVPPLKIAVAKQGEFIYATKRGIVRLRNDHEITLEDVLFCKEAAGNLMSVKRLQEAGMSIEFDKSGVTISKNGLMVVKNSGMLNNVPVINFQAYSINAKHKNNFRLWHERFGHISDGKLLEIKRKNMFSDQSLLNNLELSCEICEPCLNGKQARLPFKQLKDKTHIKRPLFVVHSDVCGPITPVTLDDKNYFVIFVDQFTHYCVTYLIKYKSDVFSMFQDFVAKSEAHFNLKVVYLYIDNGREYLSNEMRQFCVKKGISYHLTVPHTPQLNGVSERMIRTITEKARTMVSGAKLDKSFWGEAVLTATYLINRIPSRALVDSSKTPYEMWHNKKPYLKHLRVFGATVYVHIKNKQGKFDDKSFKSIFVGYEPNGFKLWDAVNEKFIVARDVVVDETNMVNSRAVKFETVFLKDSKESENKNFPNDSRKIIQTEFPNESKECDNIQFLKDSKESENKNFPNDSRKIIQTEFPNESKECDNIQFLKDSKESNKYFLNESKKRKRDDHLNESKGSGNPNESRESETAEHLKEIGIDNPTKNDGIEIINRRSERLKTKPQISYNEEDNSLNKVVLNAHTIFNDVPNSFDEIQYRDDKSSWEEAINTELNAHKINNTWTITKRPENKNIVDSRWVFSVKYNELGNPIRYKARLVARGFTQKYQIDYEETFAPVARISSFRFILSLVIQYNLKVHQMDVKTAFLNGTLKEEIYMRLPQGISCNSDNVCKLNKAIYGLKQAARCWFEVFEQALKECEFVNSSVDRCIYILDKGNINENIYVLLYVDDVVIATGDMTRMNNFKRYLMEKFRMTDLNEIKHFIGIRIEMQEDKIYLSQSAYVKKILSKFNMENCNAVSTPLPSKINYELLNSDEDCNTPCRSLIGCLMYIMLCTRPDLTTAVNILSRYSSKNNSELWQNLKRVLRYLKGTIDMKLIFKKNLAFENKIIGYVDSDWAGSEIDRKSTTGYLFKMFDFNLICWNTKRQNSVAASSTEAEYMALFEAVREALWLKFLLTSINIKLENPIKIYEDNQGCISIANNPSCHKRAKHIDIKYHFAREQVQNNVICLEYIPTENQLADIFTKPLPAARFVELRDKLGLLQDDQSNAE.

The CCHC-type zinc-finger motif lies at 230-247 (VKCHHCGREGHIKKDCFH). Residue D292 is the For protease activity of the active site. An Integrase catalytic domain is found at 476–644 (HIKRPLFVVH…TPYEMWHNKK (169 aa)). 2 disordered regions span residues 760–780 (SKES…QTEF) and 805–851 (NESK…NDGI). A compositionally biased stretch (basic and acidic residues) spans 827–841 (ESRESETAEHLKEIG).

The protein is Copia protein (GIP) of Drosophila melanogaster (Fruit fly).